A 331-amino-acid polypeptide reads, in one-letter code: Biotin synthase (331 aa).

Residues 52-281 (FFQNKVKLNM…TKEIRVSGGR (230 aa)) form the Radical SAM core domain. Cysteine 70, cysteine 74, and cysteine 77 together coordinate [4Fe-4S] cluster. Residues cysteine 114, cysteine 146, cysteine 206, and arginine 276 each coordinate [2Fe-2S] cluster.

Belongs to the radical SAM superfamily. Biotin synthase family. As to quaternary structure, homodimer. [4Fe-4S] cluster is required as a cofactor. The cofactor is [2Fe-2S] cluster.

It carries out the reaction (4R,5S)-dethiobiotin + (sulfur carrier)-SH + 2 reduced [2Fe-2S]-[ferredoxin] + 2 S-adenosyl-L-methionine = (sulfur carrier)-H + biotin + 2 5'-deoxyadenosine + 2 L-methionine + 2 oxidized [2Fe-2S]-[ferredoxin]. Its pathway is cofactor biosynthesis; biotin biosynthesis; biotin from 7,8-diaminononanoate: step 2/2. Functionally, catalyzes the conversion of dethiobiotin (DTB) to biotin by the insertion of a sulfur atom into dethiobiotin via a radical-based mechanism. This is Biotin synthase from Bacillus pumilus (strain SAFR-032).